The chain runs to 643 residues: Protein disulfide-isomerase A4 (643 aa).

Residues Met1–Ala20 form the signal peptide. Thioredoxin domains follow at residues Ala21–Gln167 and Gln167–Lys299. Positions Ala24–Glu58 are disordered. Over residues Ser32–Val56 the composition is skewed to acidic residues. The CXXC signature appears at Cys89–Cys92. 2 disulfide bridges follow: Cys89/Cys92 and Cys204/Cys207. N6-acetyllysine is present on Lys364. One can recognise a Thioredoxin 3 domain in the interval Phe503 to Thr634. The CXXC motif lies at Cys553 to Cys556. The cysteines at positions 553 and 556 are disulfide-linked. The Prevents secretion from ER signature appears at Lys640–Leu643.

This sequence belongs to the protein disulfide isomerase family. In terms of assembly, part of a large chaperone multiprotein complex comprising DNAJB11, HSP90B1, HSPA5, HYOU, PDIA2, PDIA4, PDIA6, PPIB, SDF2L1, UGGT1 and very small amounts of ERP29, but not, or at very low levels, CALR nor CANX. Component of a complex containing at least CRELD2, MANF, MATN3 and PDIA4. O-glycosylated.

The protein localises to the endoplasmic reticulum lumen. Its subcellular location is the melanosome. It catalyses the reaction Catalyzes the rearrangement of -S-S- bonds in proteins.. The polypeptide is Protein disulfide-isomerase A4 (Pdia4) (Rattus norvegicus (Rat)).